The chain runs to 409 residues: Multifunctional CCA protein (409 aa).

Gly8 and Arg11 together coordinate ATP. Gly8 and Arg11 together coordinate CTP. Asp21 and Asp23 together coordinate Mg(2+). Residues Arg91, Arg137, and Arg140 each coordinate ATP. Residues Arg91, Arg137, and Arg140 each contribute to the CTP site. In terms of domain architecture, HD spans 228-329 (TGVHVLSVLE…LELLQSFDVY (102 aa)).

The protein belongs to the tRNA nucleotidyltransferase/poly(A) polymerase family. Bacterial CCA-adding enzyme type 1 subfamily. Monomer. Can also form homodimers and oligomers. The cofactor is Mg(2+). Requires Ni(2+) as cofactor.

It carries out the reaction a tRNA precursor + 2 CTP + ATP = a tRNA with a 3' CCA end + 3 diphosphate. The catalysed reaction is a tRNA with a 3' CCA end + 2 CTP + ATP = a tRNA with a 3' CCACCA end + 3 diphosphate. Catalyzes the addition and repair of the essential 3'-terminal CCA sequence in tRNAs without using a nucleic acid template. Adds these three nucleotides in the order of C, C, and A to the tRNA nucleotide-73, using CTP and ATP as substrates and producing inorganic pyrophosphate. tRNA 3'-terminal CCA addition is required both for tRNA processing and repair. Also involved in tRNA surveillance by mediating tandem CCA addition to generate a CCACCA at the 3' terminus of unstable tRNAs. While stable tRNAs receive only 3'-terminal CCA, unstable tRNAs are marked with CCACCA and rapidly degraded. The polypeptide is Multifunctional CCA protein (Pseudomonas savastanoi pv. phaseolicola (strain 1448A / Race 6) (Pseudomonas syringae pv. phaseolicola (strain 1448A / Race 6))).